A 454-amino-acid chain; its full sequence is Lamina-associated polypeptide 2, isoforms beta/gamma (454 aa).

The interval 1–410 (MPEFLEDPSV…KSEKTKKGRS (410 aa)) is nucleoplasmic. The LEM-like domain maps to 5-48 (LEDPSVLTKDKLKSELVANNVTLPAGEQRKDVYVQLYLQHLTAR). Disordered regions lie at residues 47–117 (ARNR…ELTN) and 149–265 (LREQ…VETS). Positions 49–108 (NRPPLPAGTNSKGPPDFSSDEEREPTPVLGSGAAAAGRSRAAVGRKATKKTDKPRQEDKD) are linker. Thr-57 is modified (phosphothreonine). Phosphoserine occurs at positions 59, 66, and 67. Thr-74 carries the phosphothreonine modification. Over residues 78–93 (GSGAAAAGRSRAAVGR) the composition is skewed to low complexity. Ser-79 carries the phosphoserine modification. Arg-86 and Arg-88 each carry omega-N-methylarginine. Over residues 97–106 (KKTDKPRQED) the composition is skewed to basic and acidic residues. Residues 107 to 117 (KDDLDVTELTN) show a composition bias toward acidic residues. One can recognise an LEM domain in the interval 109–153 (DLDVTELTNEDLLDQLVKYGVNPGPIVGTTRKLYEKKLLKLREQG). The segment at 138 to 243 (TRKLYEKKLL…TSGSSKGGPL (106 aa)) is NAKAP95-binding N. A Phosphothreonine modification is found at Thr-154. Residues 155 to 178 (ESRSSTPLPTISSSAENTRQNGSN) show a composition bias toward polar residues. Ser-156 and Ser-159 each carry phosphoserine. Residues Thr-160 and Thr-164 each carry the phosphothreonine modification. A phosphoserine mark is found at Ser-166, Ser-168, Ser-177, Ser-180, Ser-184, and Ser-190. Over residues 179 to 203 (DSDRYSDNEEDSKIELKLEKREPLK) the composition is skewed to basic and acidic residues. Residue Lys-207 is modified to N6-acetyllysine. Thr-211 carries the post-translational modification Phosphothreonine. Polar residues predominate over residues 220-237 (NQSYSQAGITETEWTSGS). Phosphoserine occurs at positions 222, 224, 250, 254, 265, 292, and 306. The interval 299–371 (TGNFKHASPI…SCRRPIKGAA (73 aa)) is binds lamins B. Residues 300 to 374 (GNFKHASPIL…RPIKGAAGRP (75 aa)) are NAKAP95-binding C. Residue Thr-312 is modified to Phosphothreonine. The residue at position 315 (Ser-315) is a Phosphoserine. Arg-320 bears the Citrulline mark. Phosphoserine occurs at positions 362, 378, and 385. N6-acetyllysine is present on Lys-389. Residue Lys-401 forms a Glycyl lysine isopeptide (Lys-Gly) (interchain with G-Cter in SUMO2) linkage. Ser-402 carries the post-translational modification Phosphoserine. Residues 411 to 434 (IPVWIKILLFVVVAVFLFLVYQAM) traverse the membrane as a helical; Signal-anchor for type II membrane protein segment. At 435–454 (ETNQVNPFSNFLHVDPRKSN) the chain is on the lumenal side.

The protein belongs to the LEM family. Interacts with LMNB1, LMNB2, BANF1, AKAP8L, GMCL and chromosomes. Isoform Zeta interacts with BANF1/BAF and may sequester it in the cytoplasm. Post-translationally, mitosis-specific phosphorylation specifically abolishes its binding to lamin B and chromosomes. In terms of processing, citrullinated by PADI4. Expressed in many tissues. Most abundant in adult thymus and fetal liver.

It localises to the nucleus inner membrane. The protein localises to the cytoplasm. Functionally, may help direct the assembly of the nuclear lamina and thereby help maintain the structural organization of the nuclear envelope. Possible receptor for attachment of lamin filaments to the inner nuclear membrane. May be involved in the control of initiation of DNA replication through its interaction with NAKAP95. Thymopoietin (TP) and Thymopentin (TP5) may play a role in T-cell development and function. TP5 is an immunomodulating pentapeptide. In Homo sapiens (Human), this protein is Lamina-associated polypeptide 2, isoforms beta/gamma (TMPO).